A 207-amino-acid polypeptide reads, in one-letter code: Calcipressin-like protein (207 aa).

The tract at residues 176 to 181 (PAIIVH) is required for tax-6 interaction.

Belongs to the RCAN family. As to quaternary structure, interacts with tax-6 (via catalytic domain); the interaction is calcium-dependent. In terms of tissue distribution, expressed in lateral hypodermal cells, marginal cells of the pharynx, vulva epithelial cells, ventral and dorsal nerve cords and commissures and various neurons in the anterior and posterior regions. Expressed in male tail structures including the diagonal muscles, sensory rays and spicules. Expressed in PHC neurons and most tail neurons and support cells of the phasmid neurons. Also expressed in pharyngeal muscle, head neurons, excretory canal cells and hypodermal seam cells.

Inhibits tax-6/calcineurin A phosphatase activity and thereby negatively regulates calcineurin-mediated functions. Plays a role in modulating temperature-dependent calcium responses in AFD neurons and in addition, also negatively regulates thermotaxis in a tax-6-dependent manner in AFD neurons. In response to changes in intracellular calcium levels may also regulate nuclear translocation of transcriptional regulators such as crtc-1. May play a role in regulating body size. Plays a role in male tail tip morphogenesis. The protein is Calcipressin-like protein of Caenorhabditis elegans.